The primary structure comprises 267 residues: Tetrahydromethanopterin S-methyltransferase subunit C (267 aa).

7 helical membrane-spanning segments follow: residues 19–39 (IMAI…FMPA), 40–60 (QFSF…ADAV), 75–95 (IGMI…SVGG), 96–116 (IAGP…IGVL), 131–151 (AMVE…VVIA), 162–182 (YVVA…GILH), and 221–241 (GLMA…WAFM).

It belongs to the MtrC family. In terms of assembly, the complex is composed of 8 subunits; MtrA, MtrB, MtrC, MtrD, MtrE, MtrF, MtrG and MtrH.

The protein resides in the cell membrane. It catalyses the reaction 5-methyl-5,6,7,8-tetrahydromethanopterin + coenzyme M + 2 Na(+)(in) = 5,6,7,8-tetrahydromethanopterin + methyl-coenzyme M + 2 Na(+)(out). The protein operates within one-carbon metabolism; methanogenesis from CO(2); methyl-coenzyme M from 5,10-methylene-5,6,7,8-tetrahydromethanopterin: step 2/2. Its function is as follows. Part of a complex that catalyzes the formation of methyl-coenzyme M and tetrahydromethanopterin from coenzyme M and methyl-tetrahydromethanopterin. This is an energy-conserving, sodium-ion translocating step. This chain is Tetrahydromethanopterin S-methyltransferase subunit C, found in Methanosarcina acetivorans (strain ATCC 35395 / DSM 2834 / JCM 12185 / C2A).